We begin with the raw amino-acid sequence, 804 residues long: E3 ubiquitin-protein ligase RNF10 (804 aa).

Low complexity-rich tracts occupy residues 1-31, 78-90, and 104-113; these read MPQS…SGSS, SNQS…QKSK, and SKPFSSSSNG. Positions 1 to 134 are disordered; that stretch reads MPQSSPSAAA…AEFSPAQFSG (134 aa). At S5 the chain carries Phosphoserine. Position 110 is a phosphoserine (S110). Residues 114-124 are compositionally biased toward basic and acidic residues; sequence GRRDEVAEAQR. S128 carries the post-translational modification Phosphoserine. The RING-type zinc-finger motif lies at 225–267; it reads CPICLYPPTAAKITRCGHIFCWACILHYLSLSEKTWSKCPICY. 3 disordered regions span residues 589-611, 646-665, and 715-804; these read DIEK…ERRI, DSAL…LSPL, and KADG…VHTK. Positions 601 to 611 are enriched in basic and acidic residues; it reads AREERRRERRI. Positions 646–655 are enriched in polar residues; the sequence is DSALGPTSTE. Basic and acidic residues predominate over residues 715–729; that stretch reads KADGWPKTAPKKDDN. Over residues 795–804 the composition is skewed to polar residues; that stretch reads LFSTSVVHTK.

The protein belongs to the RNF10 family. In terms of assembly, interacts with MEOX2.

The protein localises to the cytoplasm. The protein resides in the nucleus. It catalyses the reaction S-ubiquitinyl-[E2 ubiquitin-conjugating enzyme]-L-cysteine + [acceptor protein]-L-lysine = [E2 ubiquitin-conjugating enzyme]-L-cysteine + N(6)-ubiquitinyl-[acceptor protein]-L-lysine.. Its pathway is protein modification; protein ubiquitination. E3 ubiquitin-protein ligase that catalyzes monoubiquitination of 40S ribosomal proteins RPS2/us5 and RPS3/us3 in response to ribosome stalling. Part of a ribosome quality control that takes place when ribosomes have stalled during translation initiation (iRQC): RNF10 acts by mediating monoubiquitination of RPS2/us5 and RPS3/us3, promoting their degradation by the proteasome. Also promotes ubiquitination of 40S ribosomal proteins in response to ribosome stalling during translation elongation. The action of RNF10 in iRQC is counteracted by USP10. May also act as a transcriptional factor involved in the regulation of MAG (Myelin-associated glycoprotein) expression. Acts as a regulator of Schwann cell differentiation and myelination. The polypeptide is E3 ubiquitin-protein ligase RNF10 (Mus musculus (Mouse)).